The chain runs to 181 residues: Major urinary protein 11 (181 aa).

The N-terminal stretch at 1–19 (MKMLLLLLCLGLTLVCVHA) is a signal peptide. A disulfide bond links Cys-83 and Cys-176.

Belongs to the calycin superfamily. Lipocalin family.

It is found in the secreted. Functionally, major urinary proteins (Mups) bind pheromones, and thus stabilize them to allow slow release into the air from urine marks. May protect pheromones from oxidation. May also act as pheromones themselves. In this context, they play a role in the regulation of social behaviors, such as aggression, mating, pup-suckling, territory establishment and dominance. Binds the pheromone analog 2-sec-butyl-4,5-dihydrothiazole (SBT) in vitro. The polypeptide is Major urinary protein 11 (Mus musculus (Mouse)).